A 350-amino-acid polypeptide reads, in one-letter code: Inner membrane protein YhiM (350 aa).

Residues 1–2 lie on the Cytoplasmic side of the membrane; sequence MN. A helical transmembrane segment spans residues 3–23; the sequence is IYIGWLFKLIPLIMGLICIAL. Residues 24 to 41 are Periplasmic-facing; sequence GGFVLESSGQSEYFVAGH. A helical membrane pass occupies residues 42-62; it reads VLISLAAICLALFTTAFIIIS. Residues 63–74 are Cytoplasmic-facing; the sequence is QLTRGVNTFYNT. Residues 75-95 traverse the membrane as a helical segment; sequence LFPIIGYAGSIITMIWGWALL. The Periplasmic portion of the chain corresponds to 96–104; sequence AGNDVMADE. A helical transmembrane segment spans residues 105 to 125; that stretch reads FVAGHVIFGVGMIAACVSTVA. Topologically, residues 126 to 157 are cytoplasmic; that stretch reads ASSGHFLLIPKNAAGSKSDGTPVQAYSSLIGN. A helical transmembrane segment spans residues 158-178; sequence CLIAVPVLLTLLGFIWSITLL. Over 179-190 the chain is Periplasmic; that stretch reads RSADITPHYVAG. The helical transmembrane segment at 191 to 211 threads the bilayer; the sequence is HVLLGLTAICACLIGLVATIV. Residues 212 to 225 are Cytoplasmic-facing; it reads HQTRNTFSTKEHWL. A helical transmembrane segment spans residues 226-246; sequence WCYWVIFLGSITVLQGIYVLV. At 247–257 the chain is on the periplasmic side; sequence SSDASARLAPG. Residues 258–278 traverse the membrane as a helical segment; it reads IILICLGMICYSIFSKVWLLA. Topologically, residues 279 to 290 are cytoplasmic; it reads LVWRRTCSLANR. The helical transmembrane segment at 291–311 threads the bilayer; the sequence is IPMIPVFTCLFCLFLASFLAE. The Periplasmic portion of the chain corresponds to 312 to 324; sequence MAQTDMGYFIPSR. The chain crosses the membrane as a helical span at residues 325 to 345; that stretch reads VLVGLGAVCFTLFSIVSILEA. Residues 346-350 lie on the Cytoplasmic side of the membrane; sequence GSAKK.

The protein localises to the cell inner membrane. The protein is Inner membrane protein YhiM (yhiM) of Escherichia coli (strain K12).